Here is a 128-residue protein sequence, read N- to C-terminus: Small ribosomal subunit protein uS12 (128 aa).

Asp-89 is subject to 3-methylthioaspartic acid. A disordered region spans residues 101–128 (SLDTSGVADRRNGRSKYGAKRPKEGAKK).

Belongs to the universal ribosomal protein uS12 family. Part of the 30S ribosomal subunit. Contacts proteins S8 and S17. May interact with IF1 in the 30S initiation complex.

With S4 and S5 plays an important role in translational accuracy. Its function is as follows. Interacts with and stabilizes bases of the 16S rRNA that are involved in tRNA selection in the A site and with the mRNA backbone. Located at the interface of the 30S and 50S subunits, it traverses the body of the 30S subunit contacting proteins on the other side and probably holding the rRNA structure together. The combined cluster of proteins S8, S12 and S17 appears to hold together the shoulder and platform of the 30S subunit. In Chloroherpeton thalassium (strain ATCC 35110 / GB-78), this protein is Small ribosomal subunit protein uS12.